We begin with the raw amino-acid sequence, 269 residues long: tRNA pseudouridine synthase A (269 aa).

Aspartate 51 acts as the Nucleophile in catalysis. Tyrosine 109 contributes to the substrate binding site.

This sequence belongs to the tRNA pseudouridine synthase TruA family. As to quaternary structure, homodimer.

It catalyses the reaction uridine(38/39/40) in tRNA = pseudouridine(38/39/40) in tRNA. In terms of biological role, formation of pseudouridine at positions 38, 39 and 40 in the anticodon stem and loop of transfer RNAs. The polypeptide is tRNA pseudouridine synthase A (Haemophilus influenzae (strain 86-028NP)).